The primary structure comprises 393 residues: DNA polymerase processivity factor (393 aa).

Disordered stretches follow at residues 25-50 (EMER…REPP), 311-339 (ESRF…ALAS), and 355-393 (KNGT…RCVV). The segment covering 31-41 (RDHHRDHRDHR) has biased composition (basic residues). Over residues 311–333 (ESRFERMGKQDDGKGDRSHKNDD) the composition is skewed to basic and acidic residues.

It belongs to the herpesviridae polymerase accessory protein family.

Its function is as follows. Accessory subunit of the DNA polymerase that acts to increase the processivity of polymerization. This Human herpesvirus 6A (strain Uganda-1102) (HHV-6 variant A) protein is DNA polymerase processivity factor (U27).